A 446-amino-acid polypeptide reads, in one-letter code: Immunoglobulin heavy constant gamma 3 (446 aa).

The interval 1-98 (ASTKGPSVFP…PSNTKVDKRV (98 aa)) is CH1. The Extracellular portion of the chain corresponds to 1–397 (ASTKGPSVFP…DGELDGLWTT (397 aa)). The Ig-like 1 domain maps to 6–99 (PSVFPLAPCS…SNTKVDKRVE (94 aa)). Cysteine 27 and cysteine 83 are oxidised to a cystine. The interval 99 to 160 (ELKTPLGDTT…DTPPPCPRCP (62 aa)) is hinge. 3 consecutive repeats follow at residues 116–130 (EPKS…PRCP), 131–145 (EPKS…PRCP), and 146–160 (EPKS…PRCP). 3 O-linked (GalNAc...) threonine glycosylation sites follow: threonine 122, threonine 137, and threonine 152. A CH2 region spans residues 161-270 (APELLGGPSV…PIEKTISKTK (110 aa)). Ig-like domains are found at residues 168 to 267 (PSVF…KTIS) and 276 to 372 (PQVY…KSLS). Cystine bridges form between cysteine 191–cysteine 251 and cysteine 297–cysteine 355. N-linked (GlcNAc...) asparagine glycosylation is found at asparagine 227 and asparagine 322. The interval 271-376 (GQPREPQVYT…TQKSLSLSPE (106 aa)) is CH3. A helical transmembrane segment spans residues 398–418 (ITIFITLFLLSVCYSATVTFF). Over 419 to 446 (KVKWIFSSVVDLKQTIIPDYRNMIGQGA) the chain is Cytoplasmic.

In terms of assembly, immunoglobulins are composed of two identical heavy chains and two identical light chains; disulfide-linked. Post-translationally, N-linked glycans at Asn-322 are noncore fucosylated and the vast majority are diantennary species with a bisecting GlcNAc. Among them the most dominant glycans are HexNAc5Hex4, HexNAc5Hex5, and HexNAc5Hex5Sia1. N-linked glycans at Asn-227 are diantennary core fucosylated structures without bisecting GlcNAc (HexNAc4Hex4Fuc1, HexNAc4Hex5Fuc1, and HexNAc4Hex5Fuc1Sia1). Glycosylation on Asn-227 is required for interaction with Fc receptors and ability to activate the complement pathway. In terms of processing, (Microbial infection) Deglycosylation on Asn-227 by S.pyogenes EndoS or Endos2 endoglucosidases prevents interaction between immunoglobulin-gamma (IgG) and Fc receptors, impairing ability to activate the complement pathway. Post-translationally, O-linked glycans are non-, mono- and disialylated core 1-type O-glycans.

It localises to the secreted. The protein resides in the cell membrane. In terms of biological role, constant region of immunoglobulin heavy chains. Immunoglobulins, also known as antibodies, are membrane-bound or secreted glycoproteins produced by B lymphocytes. In the recognition phase of humoral immunity, the membrane-bound immunoglobulins serve as receptors which, upon binding of a specific antigen, trigger the clonal expansion and differentiation of B lymphocytes into immunoglobulins-secreting plasma cells. Secreted immunoglobulins mediate the effector phase of humoral immunity, which results in the elimination of bound antigens. The antigen binding site is formed by the variable domain of one heavy chain, together with that of its associated light chain. Thus, each immunoglobulin has two antigen binding sites with remarkable affinity for a particular antigen. The variable domains are assembled by a process called V-(D)-J rearrangement and can then be subjected to somatic hypermutations which, after exposure to antigen and selection, allow affinity maturation for a particular antigen. This chain is Immunoglobulin heavy constant gamma 3, found in Homo sapiens (Human).